We begin with the raw amino-acid sequence, 102 residues long: Large ribosomal subunit protein bL21 (102 aa).

Belongs to the bacterial ribosomal protein bL21 family. Part of the 50S ribosomal subunit. Contacts protein L20.

In terms of biological role, this protein binds to 23S rRNA in the presence of protein L20. The sequence is that of Large ribosomal subunit protein bL21 from Ehrlichia chaffeensis (strain ATCC CRL-10679 / Arkansas).